We begin with the raw amino-acid sequence, 410 residues long: Serine/threonine transporter SstT (410 aa).

10 consecutive transmembrane segments (helical) span residues 15–35, 49–69, 82–102, 118–138, 142–162, 190–210, 217–237, 299–319, 331–351, and 358–378; these read GSLV…AWLS, FVNA…ISSI, PIVM…VVAS, IVPP…MVTN, AVMK…GFAF, FAPV…GFDA, LLGL…PLLV, MAGA…TLGI, LVAS…LLLI, and FGIP…IGVL.

This sequence belongs to the dicarboxylate/amino acid:cation symporter (DAACS) (TC 2.A.23) family.

The protein resides in the cell inner membrane. It carries out the reaction L-serine(in) + Na(+)(in) = L-serine(out) + Na(+)(out). The catalysed reaction is L-threonine(in) + Na(+)(in) = L-threonine(out) + Na(+)(out). In terms of biological role, involved in the import of serine and threonine into the cell, with the concomitant import of sodium (symport system). In Erwinia tasmaniensis (strain DSM 17950 / CFBP 7177 / CIP 109463 / NCPPB 4357 / Et1/99), this protein is Serine/threonine transporter SstT.